Reading from the N-terminus, the 379-residue chain is Homoserine O-succinyltransferase (379 aa).

In terms of domain architecture, AB hydrolase-1 spans 51 to 360 (NAVLICHALS…DAPQGHDAFL (310 aa)). The active-site Nucleophile is Ser157. Residue Arg227 participates in substrate binding. Residues Asp323 and His356 contribute to the active site. Asp357 is a substrate binding site.

It belongs to the AB hydrolase superfamily. MetX family. Homodimer.

Its subcellular location is the cytoplasm. It carries out the reaction L-homoserine + succinyl-CoA = O-succinyl-L-homoserine + CoA. The protein operates within amino-acid biosynthesis; L-methionine biosynthesis via de novo pathway; O-succinyl-L-homoserine from L-homoserine: step 1/1. Functionally, transfers a succinyl group from succinyl-CoA to L-homoserine, forming succinyl-L-homoserine. The chain is Homoserine O-succinyltransferase from Stutzerimonas stutzeri (strain A1501) (Pseudomonas stutzeri).